The chain runs to 82 residues: uncharacterized protein (82 aa).

Transmembrane regions (helical) follow at residues 1–21, 22–42, and 62–82; these read MSAS…SVST, VLLG…LAAF, and WRLL…LTLL.

The protein resides in the cell membrane. This is an uncharacterized protein from Stutzerimonas stutzeri (Pseudomonas stutzeri).